We begin with the raw amino-acid sequence, 604 residues long: Kinesin-like protein KIN-14O (604 aa).

A coiled-coil region spans residues 22–61 (MLNHDKDISALQEEISALRSRQRHLDHRRQEALDKLIDLK). A Kinesin motor domain is found at 63–387 (SIRVFCRVRP…LSFAKRARSI (325 aa)). 141-148 (GQTGTGKT) lines the ATP pocket. Residues 383-443 (RARSIESSKE…EERKKLSSSA (61 aa)) adopt a coiled-coil conformation. 2 disordered regions span residues 465 to 511 (DSAE…KTRL) and 565 to 604 (SNNS…SSLT). Positions 565-574 (SNNSIDSTAA) are enriched in polar residues. A compositionally biased stretch (basic residues) spans 593–604 (LHQHRRRMSSLT).

This sequence belongs to the TRAFAC class myosin-kinesin ATPase superfamily. Kinesin family. KIN-14 subfamily.

The sequence is that of Kinesin-like protein KIN-14O from Oryza sativa subsp. japonica (Rice).